We begin with the raw amino-acid sequence, 196 residues long: Large ribosomal subunit protein mL66 (196 aa).

The N-terminal 34 residues, 1-34, are a transit peptide targeting the mitochondrion; sequence MAALNVLVSGCGRFLRGLLTGPTVTSWARPPARG.

This sequence belongs to the bacterial ribosomal protein bS18 family. Mitochondrion-specific ribosomal protein mL66 subfamily. In terms of assembly, component of the mitochondrial ribosome small subunit (28S) which comprises a 12S rRNA and about 30 distinct proteins.

The protein localises to the mitochondrion. The polypeptide is Large ribosomal subunit protein mL66 (MRPS18A) (Bos taurus (Bovine)).